The sequence spans 1347 residues: Probable serine/threonine-protein kinase DDB_G0288147 (1347 aa).

Residues 12–67 (NHRFEPYTLKHLTICKRCEKEIIGVSNSAQICYSCKNIYHTRCCKEIETKKLELIC) form a Phorbol-ester/DAG-type zinc finger. Disordered stretches follow at residues 262–316 (PFNE…LNES), 333–402 (SNNS…KSSK), and 463–485 (DNNNNNNNNNNNNNNNSNNNNNN). The span at 271 to 282 (DSTLSASTYNRR) shows a compositional bias: polar residues. Low complexity-rich tracts occupy residues 286–316 (KNKNSNKNNTSSSSSAPASASSSKHSNLNES), 333–342 (SNNSNNLAAL), and 350–361 (TTTTTTTTTTTT). Basic residues-rich tracts occupy residues 366–382 (NNHHHHQHHHQNSKSRK) and 389–402 (NKKKIKSPKNKSSK). Low complexity predominate over residues 464–485 (NNNNNNNNNNNNNNNSNNNNNN). The Protein kinase domain maps to 599 to 854 (VKINVEIYDS…EILKVFYSLL (256 aa)). ATP is bound by residues 605–613 (IYDSPLCTV) and lysine 626. Catalysis depends on aspartate 724, which acts as the Proton acceptor. 2 disordered regions span residues 937–1241 (SERK…IVNP) and 1282–1310 (SSDSSNSLSDPESEEYSMPIKRSSSIRSP). Positions 976–986 (IIDDDDDDDDD) are enriched in acidic residues. 2 stretches are compositionally biased toward low complexity: residues 1004–1015 (NINSENKNNNNV) and 1024–1062 (SSNSNNNNNNNNNNNNNNNNNNNNNNNNNNSNNNNNNNN). 2 stretches are compositionally biased toward polar residues: residues 1063–1083 (LRQNQFLGNDLNKSQDNNQLM) and 1118–1127 (LSSSQTSEIG). 2 stretches are compositionally biased toward low complexity: residues 1128 to 1241 (DNNT…IVNP) and 1282 to 1291 (SSDSSNSLSD).

This sequence belongs to the protein kinase superfamily. TKL Ser/Thr protein kinase family.

The catalysed reaction is L-seryl-[protein] + ATP = O-phospho-L-seryl-[protein] + ADP + H(+). It catalyses the reaction L-threonyl-[protein] + ATP = O-phospho-L-threonyl-[protein] + ADP + H(+). The chain is Probable serine/threonine-protein kinase DDB_G0288147 from Dictyostelium discoideum (Social amoeba).